The chain runs to 520 residues: Putative lipase ATG15 (520 aa).

At 1–14 (MLHKSPSRKRFASP) the chain is on the cytoplasmic side. A helical; Signal-anchor for type II membrane protein membrane pass occupies residues 15 to 35 (LHLGCILTLTVLCLIAYYFAL). The Lumenal segment spans residues 36–520 (PDYLSVGKSS…WLGFCTKYEL (485 aa)). Residues N173, N202, and N208 are each glycosylated (N-linked (GlcNAc...) asparagine). S332 functions as the Charge relay system in the catalytic mechanism.

It belongs to the AB hydrolase superfamily. Lipase family. In terms of assembly, binds to both phosphatidylinositol (PI) and phosphatidylinositol 3,5-bisphosphate (PIP2). Post-translationally, glycosylated.

It localises to the endosome. Its subcellular location is the multivesicular body membrane. The protein resides in the prevacuolar compartment membrane. The enzyme catalyses a triacylglycerol + H2O = a diacylglycerol + a fatty acid + H(+). Its function is as follows. Lipase which is essential for lysis of subvacuolar cytoplasm to vacuole targeted bodies and intravacuolar autophagic bodies. Involved in the lysis of intravacuolar multivesicular body (MVB) vesicles. The intravacuolar membrane disintegration by ATG15 is critical to life span extension. The chain is Putative lipase ATG15 (ATG15) from Saccharomyces cerevisiae (strain ATCC 204508 / S288c) (Baker's yeast).